A 647-amino-acid chain; its full sequence is Chaperone protein DnaK (647 aa).

The residue at position 200 (Thr200) is a Phosphothreonine; by autocatalysis. The segment covering 611–631 (AGEQGAAGAAGAGAQQQAQPQ) has biased composition (low complexity). The disordered stretch occupies residues 611 to 647 (AGEQGAAGAAGAGAQQQAQPQDDNVVDAEFKEVNDKK). Basic and acidic residues predominate over residues 638–647 (AEFKEVNDKK).

Belongs to the heat shock protein 70 family.

Acts as a chaperone. The protein is Chaperone protein DnaK of Cupriavidus taiwanensis (strain DSM 17343 / BCRC 17206 / CCUG 44338 / CIP 107171 / LMG 19424 / R1) (Ralstonia taiwanensis (strain LMG 19424)).